A 1145-amino-acid polypeptide reads, in one-letter code: Major DNA-binding protein (1145 aa).

Positions 1115-1145 (APQAAAPQYSGSSSVAGKKRKANVILGDLDL) are required for nuclear localization.

This sequence belongs to the herpesviridae major DNA-binding protein family. As to quaternary structure, homooligomers. Forms double-helical filaments necessary for the formation of replication compartments within the host nucleus. Interacts with the origin-binding protein. Interacts with the helicase primase complex; this interaction stimulates primer synthesis activity of the helicase-primase complex. Interacts with the DNA polymerase. Interacts with the alkaline exonuclease; this interaction increases its nuclease processivity.

The protein localises to the host nucleus. Functionally, plays several crucial roles in viral infection. Participates in the opening of the viral DNA origin to initiate replication by interacting with the origin-binding protein. May disrupt loops, hairpins and other secondary structures present on ssDNA to reduce and eliminate pausing of viral DNA polymerase at specific sites during elongation. Promotes viral DNA recombination by performing strand-transfer, characterized by the ability to transfer a DNA strand from a linear duplex to a complementary single-stranded DNA circle. Can also catalyze the renaturation of complementary single strands. Additionally, reorganizes the host cell nucleus, leading to the formation of prereplicative sites and replication compartments. This process is driven by the protein which can form double-helical filaments in the absence of DNA. In Equus caballus (Horse), this protein is Major DNA-binding protein.